The primary structure comprises 446 residues: MSSSTSTIVAIASAAGTGGVGIVRLSGPQSRQIAVQLGVARLQPRHAHYARFRDAQGAVIDDGIALWFNAPHSFTGEDVVELQGHGSPVLLRQLVARCIELGARQARAGEFSERAFLNGKLDLAQAEAIADVIAAGDLRAARAARRALDGVFSRRVDAVAHTLTRLRIHVEAAIDFADEPLDTLGGNQVRDGLTQARTLLAQLLRDAERGRTLRDGLHAVLIGPPNAGKSSLLNALAGSERAIVTDVAGTTRDTLHEAIQLDGFELTLVDTAGLRDGGDAIEREGMRRARAELERADLALVVLDARDPQAARAAIGDAIDAVPRQLWIHNKCDLLSDAAPLDVNAIAVSAVTGQGLEQLHIRLRELALGDGVEGVDGEFSARTRHVEALRRAERHVDAADLELGFEQLELAAEELRLAHEALGEITGKISADDLLGKIFSSFCIGK.

Positions 24, 81, and 120 each coordinate (6S)-5-formyl-5,6,7,8-tetrahydrofolate. The region spanning 216–368 is the TrmE-type G domain; that stretch reads GLHAVLIGPP…LHIRLRELAL (153 aa). Asparagine 226 contacts K(+). GTP-binding positions include 226-231, 245-251, and 270-273; these read NAGKSS, TDVAGTT, and DTAG. Residue serine 230 coordinates Mg(2+). Threonine 245, valine 247, and threonine 250 together coordinate K(+). Threonine 251 lines the Mg(2+) pocket. (6S)-5-formyl-5,6,7,8-tetrahydrofolate is bound at residue lysine 446.

Belongs to the TRAFAC class TrmE-Era-EngA-EngB-Septin-like GTPase superfamily. TrmE GTPase family. In terms of assembly, homodimer. Heterotetramer of two MnmE and two MnmG subunits. K(+) is required as a cofactor.

Its subcellular location is the cytoplasm. Exhibits a very high intrinsic GTPase hydrolysis rate. Involved in the addition of a carboxymethylaminomethyl (cmnm) group at the wobble position (U34) of certain tRNAs, forming tRNA-cmnm(5)s(2)U34. The sequence is that of tRNA modification GTPase MnmE from Xanthomonas oryzae pv. oryzae (strain MAFF 311018).